Consider the following 657-residue polypeptide: Probable potassium transport system protein Kup (657 aa).

12 helical membrane-spanning segments follow: residues 15-35, 48-68, 100-120, 147-167, 173-193, 219-239, 251-271, 292-312, 348-368, 378-398, 403-423, and 431-451; these read SFLI…LYVM, ITPD…TLLT, WLII…MLTP, IIII…HFGT, IFGP…IVNL, LGFF…ALYS, LTWP…AAWI, MMPS…AIIA, IYMP…VLYF, YGLS…NYLL, PLPI…SFLI, and KGGF…YIWI.

Belongs to the HAK/KUP transporter (TC 2.A.72) family.

It is found in the cell membrane. The enzyme catalyses K(+)(in) + H(+)(in) = K(+)(out) + H(+)(out). Its function is as follows. Transport of potassium into the cell. Likely operates as a K(+):H(+) symporter. This is Probable potassium transport system protein Kup from Clostridium perfringens (strain SM101 / Type A).